A 187-amino-acid polypeptide reads, in one-letter code: Large ribosomal subunit protein eL18y (187 aa).

The disordered stretch occupies residues 151–187 (FGPAPGVPHSHSKPYVRAKGRKFEKARGKRKSRGFKV). 2 stretches are compositionally biased toward basic residues: residues 160-170 (SHSKPYVRAKG) and 177-187 (RGKRKSRGFKV).

Belongs to the eukaryotic ribosomal protein eL18 family. As to quaternary structure, interacts with NIK1. Interacts directly with EXA1. In terms of tissue distribution, ubiquitous.

It is found in the cytoplasm. This Arabidopsis thaliana (Mouse-ear cress) protein is Large ribosomal subunit protein eL18y (RPL18B).